The following is a 446-amino-acid chain: UDP-N-acetylmuramoylalanine--D-glutamate ligase (446 aa).

116-122 (GSNGKTT) provides a ligand contact to ATP.

Belongs to the MurCDEF family.

The protein resides in the cytoplasm. The enzyme catalyses UDP-N-acetyl-alpha-D-muramoyl-L-alanine + D-glutamate + ATP = UDP-N-acetyl-alpha-D-muramoyl-L-alanyl-D-glutamate + ADP + phosphate + H(+). The protein operates within cell wall biogenesis; peptidoglycan biosynthesis. Cell wall formation. Catalyzes the addition of glutamate to the nucleotide precursor UDP-N-acetylmuramoyl-L-alanine (UMA). The protein is UDP-N-acetylmuramoylalanine--D-glutamate ligase of Marinobacter nauticus (strain ATCC 700491 / DSM 11845 / VT8) (Marinobacter aquaeolei).